The chain runs to 264 residues: MNVQVSPDSLVIAGKTYGSRLLTGTGKFKDLEETRLATEAAGAQIVTVAIRRTNIGQNPGEPNLLDVLPPERFTILPNTAGCYTAEDAVRTCRLARELLDGHNLTKLEVLGDQKSLYPDVVQTLKAAEQLVKDGFEVMVYTSDDPILAKRLEEIGCAAVMPLAAPIGSGLGIQNKYNLLQIIEDAKVPIIVDAGVGTASDAAIAMELGCDGVLMNTAIAGARHPVLMASAMRKAVEAGREAFLAGRIPRKRYASASSPIDGLIG.

Lys-106 (schiff-base intermediate with DXP) is an active-site residue. Residues Gly-167, 193-194, and 215-216 each bind 1-deoxy-D-xylulose 5-phosphate; these read AG and NT.

This sequence belongs to the ThiG family. In terms of assembly, homotetramer. Forms heterodimers with either ThiH or ThiS.

The protein resides in the cytoplasm. The enzyme catalyses [ThiS sulfur-carrier protein]-C-terminal-Gly-aminoethanethioate + 2-iminoacetate + 1-deoxy-D-xylulose 5-phosphate = [ThiS sulfur-carrier protein]-C-terminal Gly-Gly + 2-[(2R,5Z)-2-carboxy-4-methylthiazol-5(2H)-ylidene]ethyl phosphate + 2 H2O + H(+). It functions in the pathway cofactor biosynthesis; thiamine diphosphate biosynthesis. Functionally, catalyzes the rearrangement of 1-deoxy-D-xylulose 5-phosphate (DXP) to produce the thiazole phosphate moiety of thiamine. Sulfur is provided by the thiocarboxylate moiety of the carrier protein ThiS. In vitro, sulfur can be provided by H(2)S. In Stenotrophomonas maltophilia (strain R551-3), this protein is Thiazole synthase.